A 380-amino-acid polypeptide reads, in one-letter code: Chaperone protein DnaJ (380 aa).

The 66-residue stretch at 6–71 (DYYESLEVSR…QKRAAYDRYG (66 aa)) folds into the J domain. The CR-type zinc finger occupies 136–215 (GVTKDVEVRT…CHGTGTEAKT (80 aa)). Cys-149, Cys-152, Cys-167, Cys-170, Cys-189, Cys-192, Cys-203, and Cys-206 together coordinate Zn(2+). CXXCXGXG motif repeat units lie at residues 149–156 (CEACHGSG), 167–174 (CPTCHGAG), 189–196 (CPTCHGSG), and 203–210 (CKVCHGTG).

This sequence belongs to the DnaJ family. As to quaternary structure, homodimer. Requires Zn(2+) as cofactor.

It is found in the cytoplasm. Its function is as follows. Participates actively in the response to hyperosmotic and heat shock by preventing the aggregation of stress-denatured proteins and by disaggregating proteins, also in an autonomous, DnaK-independent fashion. Unfolded proteins bind initially to DnaJ; upon interaction with the DnaJ-bound protein, DnaK hydrolyzes its bound ATP, resulting in the formation of a stable complex. GrpE releases ADP from DnaK; ATP binding to DnaK triggers the release of the substrate protein, thus completing the reaction cycle. Several rounds of ATP-dependent interactions between DnaJ, DnaK and GrpE are required for fully efficient folding. Also involved, together with DnaK and GrpE, in the DNA replication of plasmids through activation of initiation proteins. This Gluconobacter oxydans (strain 621H) (Gluconobacter suboxydans) protein is Chaperone protein DnaJ.